The primary structure comprises 431 residues: Enolase (431 aa).

Gln-163 is a (2R)-2-phosphoglycerate binding site. Glu-205 functions as the Proton donor in the catalytic mechanism. The Mg(2+) site is built by Asp-242, Glu-288, and Asp-315. Residues Lys-340, Arg-369, Ser-370, and Lys-391 each coordinate (2R)-2-phosphoglycerate. The Proton acceptor role is filled by Lys-340.

It belongs to the enolase family. It depends on Mg(2+) as a cofactor.

It is found in the cytoplasm. It localises to the secreted. Its subcellular location is the cell surface. It catalyses the reaction (2R)-2-phosphoglycerate = phosphoenolpyruvate + H2O. The protein operates within carbohydrate degradation; glycolysis; pyruvate from D-glyceraldehyde 3-phosphate: step 4/5. Catalyzes the reversible conversion of 2-phosphoglycerate (2-PG) into phosphoenolpyruvate (PEP). It is essential for the degradation of carbohydrates via glycolysis. This is Enolase from Bacillus cereus (strain B4264).